We begin with the raw amino-acid sequence, 364 residues long: tRNA N6-adenosine threonylcarbamoyltransferase (364 aa).

Residues H118 and H122 each coordinate Fe cation. Residues 140–144 (LVSGG), D173, G186, and N288 each bind substrate. D316 contacts Fe cation.

The protein belongs to the KAE1 / TsaD family. Requires Fe(2+) as cofactor.

The protein localises to the cytoplasm. It carries out the reaction L-threonylcarbamoyladenylate + adenosine(37) in tRNA = N(6)-L-threonylcarbamoyladenosine(37) in tRNA + AMP + H(+). Its function is as follows. Required for the formation of a threonylcarbamoyl group on adenosine at position 37 (t(6)A37) in tRNAs that read codons beginning with adenine. Is involved in the transfer of the threonylcarbamoyl moiety of threonylcarbamoyl-AMP (TC-AMP) to the N6 group of A37, together with TsaE and TsaB. TsaD likely plays a direct catalytic role in this reaction. The sequence is that of tRNA N6-adenosine threonylcarbamoyltransferase from Cereibacter sphaeroides (strain ATCC 17023 / DSM 158 / JCM 6121 / CCUG 31486 / LMG 2827 / NBRC 12203 / NCIMB 8253 / ATH 2.4.1.) (Rhodobacter sphaeroides).